Consider the following 287-residue polypeptide: Phosphatidylserine decarboxylase proenzyme (287 aa).

Active-site charge relay system; for autoendoproteolytic cleavage activity residues include D90, H147, and S252. The active-site Schiff-base intermediate with substrate; via pyruvic acid; for decarboxylase activity is the S252. S252 is modified (pyruvic acid (Ser); by autocatalysis).

The protein belongs to the phosphatidylserine decarboxylase family. PSD-B subfamily. Prokaryotic type I sub-subfamily. Heterodimer of a large membrane-associated beta subunit and a small pyruvoyl-containing alpha subunit. It depends on pyruvate as a cofactor. Is synthesized initially as an inactive proenzyme. Formation of the active enzyme involves a self-maturation process in which the active site pyruvoyl group is generated from an internal serine residue via an autocatalytic post-translational modification. Two non-identical subunits are generated from the proenzyme in this reaction, and the pyruvate is formed at the N-terminus of the alpha chain, which is derived from the carboxyl end of the proenzyme. The autoendoproteolytic cleavage occurs by a canonical serine protease mechanism, in which the side chain hydroxyl group of the serine supplies its oxygen atom to form the C-terminus of the beta chain, while the remainder of the serine residue undergoes an oxidative deamination to produce ammonia and the pyruvoyl prosthetic group on the alpha chain. During this reaction, the Ser that is part of the protease active site of the proenzyme becomes the pyruvoyl prosthetic group, which constitutes an essential element of the active site of the mature decarboxylase.

The protein localises to the cell membrane. It carries out the reaction a 1,2-diacyl-sn-glycero-3-phospho-L-serine + H(+) = a 1,2-diacyl-sn-glycero-3-phosphoethanolamine + CO2. It participates in phospholipid metabolism; phosphatidylethanolamine biosynthesis; phosphatidylethanolamine from CDP-diacylglycerol: step 2/2. In terms of biological role, catalyzes the formation of phosphatidylethanolamine (PtdEtn) from phosphatidylserine (PtdSer). This chain is Phosphatidylserine decarboxylase proenzyme, found in Pseudomonas putida (strain W619).